Consider the following 185-residue polypeptide: Ribosome-recycling factor (185 aa).

Belongs to the RRF family.

It is found in the cytoplasm. Functionally, responsible for the release of ribosomes from messenger RNA at the termination of protein biosynthesis. May increase the efficiency of translation by recycling ribosomes from one round of translation to another. In Yersinia enterocolitica serotype O:8 / biotype 1B (strain NCTC 13174 / 8081), this protein is Ribosome-recycling factor.